Reading from the N-terminus, the 485-residue chain is MGQYSVESHENGEKVYDLICVGFGPASLAIAIAIQEMLPEARPNVLFLERQQQFVWHSGMLLPGSKMQISFIKDLATLRNPQSSFTFLNYLKENGRLLDFINLGTFLPLREEFNDYLQWCASKFANLVSYGETVTLVEPVKNNNTGKVDNFVVHSKVGGIEETRRAKHVVVAVGGRPLLPKPLPEYHPRIVHSSQYSSRVPQNLTDRNAAYRIAVIGAGQSAAETFSDVASRYPNAQTTMFLRGDSLKPSDDSPFVNEIFNPSATDKFFQTPAAERHQQLVENRATNYSVVRLELIEKIYNDLYVQRLRDPSGASWKMNIKNHTEVTGFKNLSEKTVGLQMTHRENGLETVENHEFDLVIVATGYARDMHQQILDPTRELLEDATVARFPINRDYRVQFSGEKVSSDAGIYLQGCNETTHGLSDTLLSVLAVRAGEVVESIFMKSASNGHSNGHSNGHASKVSAKKAEVYTNGNGHNGVTSNGYH.

FAD is bound by residues 49–57 (ERQQQFVWH) and Gln-68. Lys-73 serves as a coordination point for L-ornithine. An FAD-binding site is contributed by Val-134. Arg-243 serves as a coordination point for NADP(+). L-ornithine contacts are provided by residues 257–260 (NEIF) and Asn-287. 287-289 (NYS) is a binding site for NADP(+). 425 to 427 (TLL) contributes to the FAD binding site. Ser-428 serves as a coordination point for L-ornithine.

This sequence belongs to the lysine N(6)-hydroxylase/L-ornithine N(5)-oxygenase family. Homotetramer. FAD serves as cofactor.

It catalyses the reaction L-ornithine + NADH + O2 = N(5)-hydroxy-L-ornithine + NAD(+) + H2O. The catalysed reaction is L-ornithine + NADPH + O2 = N(5)-hydroxy-L-ornithine + NADP(+) + H2O. It functions in the pathway siderophore biosynthesis. Functionally, L-ornithine N(5)-oxygenase; part of the gene cluster that mediates the biosynthesis of desferriferrichrome that chelates Fe(3+) to form ferrichrome. Fe(3+) is a key factor for induction of trap formation and the fungus uses the iron chelating desferriferrichrome to sequester Fe(3+) to inhibit trap formation and increase nematicidal activity. The biosynthesis of desferriferrichrome requires the action of the L-ornithine N(5)-oxygenase (LOO) Ao414 that hydroxylates L-ornithine at N(5), resulting in the formation of N(5)-hydroxyl-L-ornithine, which is subsequently N-acetylated to yield N(5)-acetyl-N(5)-hydroxy-L-ornithine (L-AHO). L-AHO harbors one hydroxamate moiety, which is the key core responsible for chelating iron. Then, L-AHO is further condensated with glycines to form desferriferrichrome through the NRPS protein Ao415. This chain is L-ornithine N(5)-oxygenase, found in Arthrobotrys oligospora (strain ATCC 24927 / CBS 115.81 / DSM 1491) (Nematode-trapping fungus).